A 427-amino-acid chain; its full sequence is Serine--tRNA ligase (427 aa).

L-serine is bound at residue 231–233 (TAE). 262-264 (RSE) is an ATP binding site. E285 serves as a coordination point for L-serine. 349–352 (EISS) serves as a coordination point for ATP. S385 contributes to the L-serine binding site.

It belongs to the class-II aminoacyl-tRNA synthetase family. Type-1 seryl-tRNA synthetase subfamily. As to quaternary structure, homodimer. The tRNA molecule binds across the dimer.

The protein localises to the cytoplasm. The catalysed reaction is tRNA(Ser) + L-serine + ATP = L-seryl-tRNA(Ser) + AMP + diphosphate + H(+). It carries out the reaction tRNA(Sec) + L-serine + ATP = L-seryl-tRNA(Sec) + AMP + diphosphate + H(+). It participates in aminoacyl-tRNA biosynthesis; selenocysteinyl-tRNA(Sec) biosynthesis; L-seryl-tRNA(Sec) from L-serine and tRNA(Sec): step 1/1. Catalyzes the attachment of serine to tRNA(Ser). Is also able to aminoacylate tRNA(Sec) with serine, to form the misacylated tRNA L-seryl-tRNA(Sec), which will be further converted into selenocysteinyl-tRNA(Sec). This chain is Serine--tRNA ligase, found in Rhizobium rhizogenes (strain K84 / ATCC BAA-868) (Agrobacterium radiobacter).